The following is a 250-amino-acid chain: 2,3-bisphosphoglycerate-dependent phosphoglycerate mutase (250 aa).

Substrate contacts are provided by residues 10–17 (RHGESQWN), 23–24 (TG), R62, 89–92 (ERHY), K100, 116–117 (RR), and 185–186 (GN). The active-site Tele-phosphohistidine intermediate is the H11. E89 functions as the Proton donor/acceptor in the catalytic mechanism.

This sequence belongs to the phosphoglycerate mutase family. BPG-dependent PGAM subfamily. In terms of assembly, homodimer.

The catalysed reaction is (2R)-2-phosphoglycerate = (2R)-3-phosphoglycerate. It participates in carbohydrate degradation; glycolysis; pyruvate from D-glyceraldehyde 3-phosphate: step 3/5. Catalyzes the interconversion of 2-phosphoglycerate and 3-phosphoglycerate. The protein is 2,3-bisphosphoglycerate-dependent phosphoglycerate mutase of Citrobacter koseri (strain ATCC BAA-895 / CDC 4225-83 / SGSC4696).